The following is a 167-amino-acid chain: Protein archease (167 aa).

Residue Ala2 is modified to N-acetylalanine. Ca(2+) contacts are provided by Asp39, Asp166, and Ile167.

The protein belongs to the archease family. As to quaternary structure, component of the tRNA-splicing ligase complex.

Its function is as follows. Component of the tRNA-splicing ligase complex required to facilitate the enzymatic turnover of catalytic subunit RTCB. Together with DDX1, acts by facilitating the guanylylation of RTCB, a key intermediate step in tRNA ligation. This chain is Protein archease (ZBTB8OS), found in Bos taurus (Bovine).